Here is a 268-residue protein sequence, read N- to C-terminus: 4-hydroxy-tetrahydrodipicolinate reductase (268 aa).

NAD(+)-binding positions include Gly7–Met12 and Glu33. An NADP(+)-binding site is contributed by Arg34. NAD(+)-binding positions include Gly97–Thr99 and Ser121–Met124. His155 serves as the catalytic Proton donor/acceptor. His156 is a (S)-2,3,4,5-tetrahydrodipicolinate binding site. The active-site Proton donor is the Lys159. Gly165–Thr166 serves as a coordination point for (S)-2,3,4,5-tetrahydrodipicolinate.

It belongs to the DapB family.

It localises to the cytoplasm. The enzyme catalyses (S)-2,3,4,5-tetrahydrodipicolinate + NAD(+) + H2O = (2S,4S)-4-hydroxy-2,3,4,5-tetrahydrodipicolinate + NADH + H(+). It carries out the reaction (S)-2,3,4,5-tetrahydrodipicolinate + NADP(+) + H2O = (2S,4S)-4-hydroxy-2,3,4,5-tetrahydrodipicolinate + NADPH + H(+). Its pathway is amino-acid biosynthesis; L-lysine biosynthesis via DAP pathway; (S)-tetrahydrodipicolinate from L-aspartate: step 4/4. In terms of biological role, catalyzes the conversion of 4-hydroxy-tetrahydrodipicolinate (HTPA) to tetrahydrodipicolinate. This Brucella melitensis biotype 1 (strain ATCC 23456 / CCUG 17765 / NCTC 10094 / 16M) protein is 4-hydroxy-tetrahydrodipicolinate reductase.